The sequence spans 246 residues: Zinc import ATP-binding protein ZnuC (246 aa).

The region spanning 24–244 is the ABC transporter domain; it reads LKIENLALAY…TLGEIFSSYI (221 aa). 56 to 63 is a binding site for ATP; that stretch reads GPNGGGKT.

Belongs to the ABC transporter superfamily. Zinc importer (TC 3.A.1.15.5) family. The complex is composed of two ATP-binding proteins (ZnuC), two transmembrane proteins (ZnuB) and a solute-binding protein (ZnuA).

It localises to the cell membrane. It carries out the reaction Zn(2+)(out) + ATP(in) + H2O(in) = Zn(2+)(in) + ADP(in) + phosphate(in) + H(+)(in). Functionally, part of the ABC transporter complex ZnuABC involved in zinc import. Responsible for energy coupling to the transport system. In Wolbachia sp. subsp. Brugia malayi (strain TRS), this protein is Zinc import ATP-binding protein ZnuC.